A 225-amino-acid chain; its full sequence is Ribonuclease T (225 aa).

The interval 1 to 21 is disordered; sequence MSEDHFDDEHEGHGGGGGSRH. One can recognise an Exonuclease domain in the interval 33–207; the sequence is VVVDVETGGF…YDTEKTAELF (175 aa). 4 residues coordinate Mg(2+): Asp-36, Glu-38, His-194, and Asp-199. His-194 (proton donor/acceptor) is an active-site residue.

This sequence belongs to the RNase T family. In terms of assembly, homodimer. Mg(2+) serves as cofactor.

Its function is as follows. Trims short 3' overhangs of a variety of RNA species, leaving a one or two nucleotide 3' overhang. Responsible for the end-turnover of tRNA: specifically removes the terminal AMP residue from uncharged tRNA (tRNA-C-C-A). Also appears to be involved in tRNA biosynthesis. The sequence is that of Ribonuclease T from Pseudomonas syringae pv. syringae (strain B728a).